The chain runs to 528 residues: Glutamate--cysteine ligase (528 aa).

This sequence belongs to the glutamate--cysteine ligase type 1 family. Type 1 subfamily.

It carries out the reaction L-cysteine + L-glutamate + ATP = gamma-L-glutamyl-L-cysteine + ADP + phosphate + H(+). Its pathway is sulfur metabolism; glutathione biosynthesis; glutathione from L-cysteine and L-glutamate: step 1/2. This chain is Glutamate--cysteine ligase, found in Janthinobacterium sp. (strain Marseille) (Minibacterium massiliensis).